Consider the following 82-residue polypeptide: Turripeptide OL139 (82 aa).

The tract at residues 58–82 (HRTTRDTADKTHGGSQRDRFFQSIA) is disordered.

In terms of processing, contains 6 disulfide bonds. As to expression, expressed by the venom duct.

It is found in the secreted. In terms of biological role, acts as a neurotoxin by inhibiting an ion channel. This is Turripeptide OL139 from Iotyrris olangoensis (Sea snail).